A 299-amino-acid polypeptide reads, in one-letter code: Serpentine receptor class gamma-30 (299 aa).

The next 7 helical transmembrane spans lie at 18-38 (GIQF…IKVL), 59-79 (ILSV…NYIP), 98-118 (ILFI…FMVV), 137-157 (IIPH…WTAF), 189-209 (IISS…MLCI), 223-243 (LTAS…MNIY), and 260-280 (ALTA…MLCL).

Belongs to the nematode receptor-like protein srg family.

It is found in the membrane. In Caenorhabditis elegans, this protein is Serpentine receptor class gamma-30 (srg-30).